A 111-amino-acid chain; its full sequence is MADRVLRGSRLGAVSYETDRNHDLAPRQIARYRTDNGEEFEVPFADDAEIPGTWLCRNGMEGTLIEGDLPEPKKVKPPRTHWDMLLERRSIEELEELLKERLELIRSRRRG.

It belongs to the RNA polymerase-binding protein RbpA family. As to quaternary structure, forms a complex with the RNAP catalytic core and with free principal sigma factors.

Functionally, binds to RNA polymerase (RNAP), stimulating transcription from principal, but not alternative sigma factor promoters. This chain is RNA polymerase-binding protein RbpA, found in Mycobacterium tuberculosis (strain CDC 1551 / Oshkosh).